The chain runs to 206 residues: MKVKICGVTHPEDAEYAALLGADYIGMIFAEKSKRKTSLSMAKSITNTTKRLGAEPVGVFVEQTTDQIIAICEQTGIKTVQLHNSFPSGSLEKLLRDYSIIYAISVRENGDVCHPQSLPPKVIPLYDTEKGGTGKQFNWKAFSSPRDTFWMLAGGLNPANIEEAIATLHPNGVDVATGVEFPNKTRKDPDLLKAFIQSAKILGEKI.

It belongs to the TrpF family.

It carries out the reaction N-(5-phospho-beta-D-ribosyl)anthranilate = 1-(2-carboxyphenylamino)-1-deoxy-D-ribulose 5-phosphate. It functions in the pathway amino-acid biosynthesis; L-tryptophan biosynthesis; L-tryptophan from chorismate: step 3/5. The chain is N-(5'-phosphoribosyl)anthranilate isomerase from Chlamydia felis (strain Fe/C-56) (Chlamydophila felis).